We begin with the raw amino-acid sequence, 821 residues long: Cell wall integrity transcriptional regulator CAS5 (821 aa).

Disordered stretches follow at residues 42-66 (HLQS…LNQH), 219-245 (FESP…LSTP), 305-432 (TKSN…STSQ), 544-576 (QEEE…TSSL), and 607-750 (VKQE…KHKC). The span at 222–245 (PQSHIQSQPSYSQGYHNQNSLSTP) shows a compositional bias: polar residues. Low complexity predominate over residues 305–318 (TKSNSTSSYNSTLN). The segment covering 319-329 (PFYTPSQQLSS) has biased composition (polar residues). The span at 372–387 (QLRKAKSYTSLLRKKK) shows a compositional bias: basic residues. Residues 396-412 (QNQQHQQQQQQQQQQQQ) are compositionally biased toward low complexity. Over residues 422–432 (QNLSFPNSTSQ) the composition is skewed to polar residues. Acidic residues predominate over residues 545 to 561 (EEEQEHQDEQMEIDSFE). Low complexity-rich tracts occupy residues 662-674 (LVNK…NNDT) and 684-693 (KNTNGNGNND). Over residues 694 to 714 (NDNDSEENNDNVDDADDDDDG) the composition is skewed to acidic residues. 2 C2H2-type zinc fingers span residues 748–770 (HKCP…LKSH) and 776–801 (FECQ…KKIH). Ser-769 is subject to Phosphoserine.

Post-translationally, phosphorylation at Ser-769 and probably additional serine residues. GLC7 dephosphorylates CAS5 in response to cell wall stress which leads to its translocation to the nucleus.

The protein resides in the nucleus. The protein localises to the cytoplasm. Transcription factor that acts with ADA2 to promote cell wall integrity. Regulates the expression of target genes in concert with the transcriptional regulators SWI4 and SWI6. Crucial for proper cell cycle dynamics and responses to echinocandins, which inhibit beta-1,3-glucan synthesis. Has distinct transcriptional targets under basal and stress conditions. Also regulates a transcriptional network that influences the response to fluconazole. Plays a key role in adherence, hyphal development, and virulence. Acts as a repressor of hypha-specific genes during yeast-form growth. The sequence is that of Cell wall integrity transcriptional regulator CAS5 from Candida albicans (strain SC5314 / ATCC MYA-2876) (Yeast).